The sequence spans 518 residues: MASSSSISNHKIPNTLMFLVIVNFLYLIQTNSAVSISSNSNSHFSRFSRHRSSPSSKTKQGFLATVQESMNHALLARSLAFNLTLSHRTVQTHTFDPIHDCLELLDDTLDMLSRIHADNDEEDVHTWLSAALTNQDTCEQSLQEKSESYKHGLAMDFVARNLTGLLTSSLDLFVSVKSKHRKLLSKQEYFPTFVPSSEQRRLLEAPVEELNVDAVVAPDGSGTHKTIGEALLSTSLASSGGRTKIYLKAGTYHENINIPTKQKNVMLVGDGKGKTVIVGSRSNRGGWTTYKTATVAAMGEGFIARDMTFVNNAGPKSEQAVALRVGADKSVVHRCSVEGYQDSLYTHSKRQFYRETDITGTVDFIFGNSAVVFQSCNIAARKPLPGQRNFVTAQGRSNPGQNTGIAIQNCRITAESMTYLGRPWKEYSRTVVMQSFIGGSIHPSGWSPWSGGFGLKSLFYGEYGNSGPGSSVSGRVKWSGCHPSLTVTEAEKFTVASFIDGNIWLPSTGVSFDPGLVN.

The signal sequence occupies residues 1-33 (MASSSSISNHKIPNTLMFLVIVNFLYLIQTNSA). The tract at residues 30–172 (TNSAVSISSN…TGLLTSSLDL (143 aa)) is pectinesterase inhibitor 16. 2 N-linked (GlcNAc...) asparagine glycosylation sites follow: Asn82 and Asn161. Residues 213–502 (DAVVAPDGSG…FTVASFIDGN (290 aa)) form a pectinesterase 16 region. Residues Thr289 and Gln319 each coordinate substrate. The active-site Proton donor; for pectinesterase activity is the Asp342. Asp363 serves as the catalytic Nucleophile; for pectinesterase activity. The substrate site is built by Arg422 and Trp424.

The protein in the N-terminal section; belongs to the PMEI family. It in the C-terminal section; belongs to the pectinesterase family. In terms of tissue distribution, expressed in siliques and floral stems.

The protein localises to the secreted. It localises to the cell wall. The catalysed reaction is [(1-&gt;4)-alpha-D-galacturonosyl methyl ester](n) + n H2O = [(1-&gt;4)-alpha-D-galacturonosyl](n) + n methanol + n H(+). It participates in glycan metabolism; pectin degradation; 2-dehydro-3-deoxy-D-gluconate from pectin: step 1/5. Acts in the modification of cell walls via demethylesterification of cell wall pectin. This chain is Probable pectinesterase/pectinesterase inhibitor 16 (PME16), found in Arabidopsis thaliana (Mouse-ear cress).